The primary structure comprises 453 residues: tRNA modification GTPase MnmE (453 aa).

The (6S)-5-formyl-5,6,7,8-tetrahydrofolate site is built by Arg22, Glu79, and Lys119. A TrmE-type G domain is found at 215-376; that stretch reads GMKVVIAGRP…LKQHLKSLMG (162 aa). K(+) is bound at residue Asn225. Residues 225-230, 244-250, 269-272, and 334-337 contribute to the GTP site; these read NAGKSS, TEIAGTT, DTAG, and NKAD. Mg(2+) is bound at residue Ser229. 3 residues coordinate K(+): Thr244, Ile246, and Thr249. Residue Thr250 participates in Mg(2+) binding. Lys453 serves as a coordination point for (6S)-5-formyl-5,6,7,8-tetrahydrofolate.

Belongs to the TRAFAC class TrmE-Era-EngA-EngB-Septin-like GTPase superfamily. TrmE GTPase family. In terms of assembly, homodimer. Heterotetramer of two MnmE and two MnmG subunits. Requires K(+) as cofactor.

Its subcellular location is the cytoplasm. Its function is as follows. Exhibits a very high intrinsic GTPase hydrolysis rate. Involved in the addition of a carboxymethylaminomethyl (cmnm) group at the wobble position (U34) of certain tRNAs, forming tRNA-cmnm(5)s(2)U34. The protein is tRNA modification GTPase MnmE of Shewanella frigidimarina (strain NCIMB 400).